Reading from the N-terminus, the 694-residue chain is Transcription activator of gluconeogenesis PTRG_06536 (694 aa).

A disordered region spans residues 1 to 57 (MTTPDAEDASPSPEYRSDQDDDMAAEQTTDRQSGDASPTQKPANGKPNAKDPLRPRR). The segment at residues 64 to 92 (CFACQRAHLTCGDERPCGRCIKRGLQDHC) is a DNA-binding region (zn(2)-C6 fungal-type). Disordered regions lie at residues 175–216 (FSNQ…FGPL), 289–369 (AMAF…GDNP), 384–420 (AQRSPLVSRPQQENRPPTTALQSIHANGIRKRQRDTK), and 539–569 (VNLGTNRESSESDTSTQNTTPNLSAQDSEGA). Positions 193–204 (SVQNAGAPSTMS) are enriched in polar residues. Residues 205 to 214 (QGQQGMQQFG) show a composition bias toward low complexity. Residues 302-324 (WQETQSRQGSMHVHTPNNTSGSG) show a composition bias toward polar residues. Over residues 349–363 (ATHSTASPASTDAST) the composition is skewed to low complexity. Residues 392–408 (RPQQENRPPTTALQSIH) show a composition bias toward polar residues. The PAS domain occupies 485–559 (LQRHLMTLQE…SDTSTQNTTP (75 aa)).

Belongs to the ERT1/acuK family.

The protein resides in the nucleus. Its function is as follows. Transcription factor which regulates nonfermentable carbon utilization. Activator of gluconeogenetic genes. The sequence is that of Transcription activator of gluconeogenesis PTRG_06536 from Pyrenophora tritici-repentis (strain Pt-1C-BFP) (Wheat tan spot fungus).